Consider the following 238-residue polypeptide: Probable transcriptional regulatory protein STER_0242 (238 aa).

This sequence belongs to the TACO1 family. YeeN subfamily.

It is found in the cytoplasm. In Streptococcus thermophilus (strain ATCC BAA-491 / LMD-9), this protein is Probable transcriptional regulatory protein STER_0242.